A 555-amino-acid polypeptide reads, in one-letter code: 2-isopropylmalate synthase (555 aa).

The Pyruvate carboxyltransferase domain occupies 30-303 (PIWCSVDLRD…DPGLDCTDIN (274 aa)). The Mg(2+) site is built by aspartate 39, histidine 242, histidine 244, and asparagine 278. Residues 437–555 (QPDARIKFVD…VSAANRVIAK (119 aa)) are regulatory domain.

Belongs to the alpha-IPM synthase/homocitrate synthase family. LeuA type 2 subfamily. Homodimer. Mg(2+) is required as a cofactor.

Its subcellular location is the cytoplasm. The enzyme catalyses 3-methyl-2-oxobutanoate + acetyl-CoA + H2O = (2S)-2-isopropylmalate + CoA + H(+). It functions in the pathway amino-acid biosynthesis; L-leucine biosynthesis; L-leucine from 3-methyl-2-oxobutanoate: step 1/4. Functionally, catalyzes the condensation of the acetyl group of acetyl-CoA with 3-methyl-2-oxobutanoate (2-ketoisovalerate) to form 3-carboxy-3-hydroxy-4-methylpentanoate (2-isopropylmalate). The chain is 2-isopropylmalate synthase from Brucella melitensis biotype 1 (strain ATCC 23456 / CCUG 17765 / NCTC 10094 / 16M).